Consider the following 499-residue polypeptide: ADP,ATP carrier protein 5 (499 aa).

Helical transmembrane passes span 25–45 (LGKF…QNIL), 61–81 (IAGF…VIIY), 93–113 (IFYY…FVIY), 148–168 (YIVY…LLFW), 183–203 (FYTF…FLMM), 223–243 (ITLV…CCVL), 286–306 (LWLL…VEAV), 327–347 (LYIL…NNVM), 356–376 (AVIS…LIVF), 380–400 (ILSL…VSIG), and 468–488 (SISP…IYAV).

This sequence belongs to the ADP/ATP translocase tlc family.

Its subcellular location is the cell membrane. Functionally, provides the rickettsial cell with host ATP in exchange for rickettsial ADP. This is an obligate exchange system. This energy acquiring activity is an important component of rickettsial parasitism. The protein is ADP,ATP carrier protein 5 (tlcE) of Rickettsia felis (strain ATCC VR-1525 / URRWXCal2) (Rickettsia azadi).